A 223-amino-acid chain; its full sequence is Chalcone--flavanone isomerase 2 (223 aa).

3 residues coordinate substrate: T41, N106, and S183.

Belongs to the chalcone isomerase family.

The enzyme catalyses a chalcone = a flavanone.. The protein operates within secondary metabolite biosynthesis; flavonoid biosynthesis. Catalyzes the intramolecular cyclization of bicyclic chalcones into tricyclic (S)-flavanones. Responsible for the isomerization of 4,2',4',6'-tetrahydroxychalcone (also termed chalcone) into naringenin. The polypeptide is Chalcone--flavanone isomerase 2 (CHI2) (Arabidopsis thaliana (Mouse-ear cress)).